The primary structure comprises 702 residues: Polyribonucleotide nucleotidyltransferase (702 aa).

Mg(2+)-binding residues include D486 and D492. The region spanning 553-612 (PSMATIKIDPEKIRDVIGKGGATIRSITEQTGASIDLDDDGTVRIYAADKASSDAALLKI) is the KH domain. The region spanning 622-690 (DKLYKGKVVR…ARGRIKLSMK (69 aa)) is the S1 motif domain.

It belongs to the polyribonucleotide nucleotidyltransferase family. As to quaternary structure, component of the RNA degradosome, which is a multiprotein complex involved in RNA processing and mRNA degradation. It depends on Mg(2+) as a cofactor.

It is found in the cytoplasm. It carries out the reaction RNA(n+1) + phosphate = RNA(n) + a ribonucleoside 5'-diphosphate. Involved in mRNA degradation. Catalyzes the phosphorolysis of single-stranded polyribonucleotides processively in the 3'- to 5'-direction. This Marinomonas sp. (strain MWYL1) protein is Polyribonucleotide nucleotidyltransferase.